The sequence spans 151 residues: MERPESELIRQSWRAVSRSPLEHGTVLFSRLFALEPSLLPLFQYNGRQFSSPEDCLSSPEFLDHIRKVMLVIDAAVTNVEDLSSLEEYLATLGRKHRAVGVRLSSFSTVGESLLYMLEKCLGPDFTPATRTAWSQLYGAVVQAMSRGWDGE.

The Globin domain maps to 1–149; the sequence is MERPESELIR…VVQAMSRGWD (149 aa). Heme b-binding residues include His64 and His96.

It belongs to the globin family. In terms of assembly, monomer. Homodimer and homotetramer; disulfide-linked. Mainly monomeric but also detected as part of homodimers and homotetramers. Interacts with 14-3-3 proteins; regulates the phosphorylation of NGB. Could interact (ferrous form) with G-alpha(i) proteins (GTP-bound form). Post-translationally, phosphorylated during hypoxia by ERK1/ERK2. Phosphorylation regulates the heme pocket hexacoordination preventing the association of His-64 with the heme metal center. Thereby, promotes the access of dioxygen and nitrite to the heme and stimulates the nitrite reductase activity. Phosphorylation during hypoxia is stabilized by 14-3-3 proteins. Widely distributed throughout the adult brain, including cerebral cortex, hippocampus, thalamus, hypothalamus, olfactory bulb, and cerebellum.

It localises to the cytoplasm. The protein localises to the cytosol. It is found in the mitochondrion matrix. It carries out the reaction Fe(III)-heme b-[protein] + nitric oxide + H2O = Fe(II)-heme b-[protein] + nitrite + 2 H(+). Monomeric globin with a bis-histidyl six-coordinate heme-iron atom through which it can bind dioxygen, carbon monoxide and nitric oxide. Could help transport oxygen and increase its availability to the metabolically active neuronal tissues, though its low quantity in tissues as well as its high affinity for dioxygen, which may limit its oxygen-releasing ability, argue against it. The ferrous/deoxygenated form exhibits a nitrite reductase activity and it could produce nitric oxide which in turn inhibits cellular respiration in response to hypoxia. In its ferrous/deoxygenated state, it may also exhibit GDI (Guanine nucleotide Dissociation Inhibitor) activity toward heterotrimeric G-alpha proteins, thereby regulating signal transduction to facilitate neuroprotective responses in the wake of hypoxia and associated oxidative stress. This Rattus norvegicus (Rat) protein is Neuroglobin.